Consider the following 126-residue polypeptide: Large ribosomal subunit protein bL20c (126 aa).

The protein belongs to the bacterial ribosomal protein bL20 family.

It localises to the plastid. The protein resides in the chloroplast. In terms of biological role, binds directly to 23S ribosomal RNA and is necessary for the in vitro assembly process of the 50S ribosomal subunit. It is not involved in the protein synthesizing functions of that subunit. The protein is Large ribosomal subunit protein bL20c of Lactuca sativa (Garden lettuce).